Reading from the N-terminus, the 502-residue chain is MSQEKYIMAIDQGTTSSRAIIFNKKGEKVSSSQKEFTQIFPQAGWVEHNANEIWNSVQSVIAGAFIESGVKPNQIEAIGITNQRETTVVWDKKTGLPIYNAIVWQSRQTAPLAEQLKSQGYVEKFHEKTGLIIDAYFSATKVRWILDHVEDAQERAEKGELLFGTIDTWLVWKLTDGAAHVTDYSNAARTMLYNIKELKWDDEILEILNIPKAILPEVRSNSEIYGKTAPFHFYGGEVPISGMAGDQQAALFGQLAFEPGMVKNTYGTGSFIIMNTGEEMQLSENNLLTTIGYGINGKVYYALEGSIFIAGSAIQWLRDGLRMVENSPESEKYARDSHNNDEVYVVPAFTGLGAPYWNQNARGSVFGLTRGTSKEDFIKATLQSIAYQVRDIIDTMQVDTQTAIQVLKVDGGAAMNNFLMQFQADILGIDIARAKNLETTALGAAFLAGLSVGYWKDLDELKLLNETGELFEPSMNESRKEQLYKGWKKAVKATQVFAEVDD.

T14 provides a ligand contact to ADP. The ATP site is built by T14, T15, and S16. Residue T14 coordinates sn-glycerol 3-phosphate. Residue R18 participates in ADP binding. R84, E85, and Y136 together coordinate sn-glycerol 3-phosphate. Residues R84, E85, and Y136 each contribute to the glycerol site. H232 is subject to Phosphohistidine; by HPr. D246 contributes to the sn-glycerol 3-phosphate binding site. 2 residues coordinate glycerol: D246 and Q247. ADP contacts are provided by T268 and G311. The ATP site is built by T268, G311, Q315, and G412. 2 residues coordinate ADP: G412 and N416.

It belongs to the FGGY kinase family. As to quaternary structure, homotetramer and homodimer (in equilibrium). Post-translationally, the phosphoenolpyruvate-dependent sugar phosphotransferase system (PTS), including enzyme I, and histidine-containing protein (HPr) are required for the phosphorylation, which leads to the activation of the enzyme.

It carries out the reaction glycerol + ATP = sn-glycerol 3-phosphate + ADP + H(+). Its pathway is polyol metabolism; glycerol degradation via glycerol kinase pathway; sn-glycerol 3-phosphate from glycerol: step 1/1. Its activity is regulated as follows. Activated by phosphorylation and inhibited by fructose 1,6-bisphosphate (FBP). In terms of biological role, key enzyme in the regulation of glycerol uptake and metabolism. Catalyzes the phosphorylation of glycerol to yield sn-glycerol 3-phosphate. The polypeptide is Glycerol kinase (Streptococcus pneumoniae serotype 19F (strain G54)).